A 439-amino-acid polypeptide reads, in one-letter code: Branched-chain amino acid permease BrnQ (439 aa).

Residues 1–9 are Cytoplasmic-facing; that stretch reads MTHQLRSRD. A helical transmembrane segment spans residues 10 to 30; the sequence is IIALGFMTFALFVGAGNIIFP. Residues 31–45 lie on the Periplasmic side of the membrane; sequence PMVGLQAGEHVWTAA. The chain crosses the membrane as a helical span at residues 46–66; that stretch reads FGFLITAVGLPVLTVVALAKV. Residues 67–79 lie on the Cytoplasmic side of the membrane; that stretch reads GGGVDSLSTPIGK. A helical transmembrane segment spans residues 80-100; that stretch reads VAGVLLATVCYLAVGPLFATP. Topologically, residues 101 to 118 are periplasmic; that stretch reads RTATVSFEVGIAPLTGDS. Residues 119-139 form a helical membrane-spanning segment; sequence ALPLFIYSLVYFAIVILVSLY. At 140 to 149 the chain is on the cytoplasmic side; that stretch reads PGKLLDTVGN. A helical membrane pass occupies residues 150 to 170; that stretch reads FLAPLKIIALVILSVAAIVWP. The Periplasmic segment spans residues 171-189; it reads AGSISTATEAYQNAAFSNG. Residues 190–210 traverse the membrane as a helical segment; sequence FVNGYLTMDTLGAMVFGIVIV. Residues 211-226 lie on the Cytoplasmic side of the membrane; sequence NAARSRGVTEARLLTR. Residues 227 to 247 form a helical membrane-spanning segment; that stretch reads YTVWAGLMAGVGLTLLYLALF. The Periplasmic portion of the chain corresponds to 248-277; that stretch reads RLGSDSASLVDQSANGAAILHAYVQHTFGG. Residues 278–298 traverse the membrane as a helical segment; the sequence is GGSFLLAALIFIACLVTAVGL. At 299 to 316 the chain is on the cytoplasmic side; the sequence is TCACAEFFAQYVPLSYRT. A helical membrane pass occupies residues 317 to 337; that stretch reads LVFILGGFSMVVSNLGLSQLI. Glutamine 338 is a topological domain (periplasmic). Residues 339 to 359 traverse the membrane as a helical segment; sequence ISVPVLTAIYPPCIALVVLSF. Residues 360–369 are Cytoplasmic-facing; the sequence is TRSWWHNSSR. Residues 370 to 390 traverse the membrane as a helical segment; it reads VIAPPMFISLLFGILDGIKAS. Over 391-404 the chain is Periplasmic; it reads AFSDILPSWAQRLP. The helical transmembrane segment at 405–425 threads the bilayer; it reads LAEQGLAWLMPTVVMVVLAII. The Cytoplasmic segment spans residues 426-439; that stretch reads WDRAAGRQVTSSAH.

This sequence belongs to the branched chain amino acid transporter family.

Its subcellular location is the cell inner membrane. In terms of biological role, liv-II branched chain amino acid transport system, which transports leucine, valine and isoleucine. This chain is Branched-chain amino acid permease BrnQ (brnQ), found in Escherichia coli O157:H7.